The primary structure comprises 491 residues: Cysteine--tRNA ligase (491 aa).

Zn(2+) is bound at residue C29. Positions 31–41 (PTVYDFAHIGN) match the 'HIGH' region motif. Residues C227, H252, and E256 each contribute to the Zn(2+) site. Residues 285–289 (KMSKS) carry the 'KMSKS' region motif. Residue K288 participates in ATP binding.

The protein belongs to the class-I aminoacyl-tRNA synthetase family. As to quaternary structure, monomer. Zn(2+) serves as cofactor.

The protein localises to the cytoplasm. The enzyme catalyses tRNA(Cys) + L-cysteine + ATP = L-cysteinyl-tRNA(Cys) + AMP + diphosphate. The polypeptide is Cysteine--tRNA ligase (Rhodopseudomonas palustris (strain TIE-1)).